The primary structure comprises 435 residues: Kynurenine--oxoglutarate transaminase (435 aa).

The substrate site is built by Gly46 and Asn198. At Lys262 the chain carries N6-(pyridoxal phosphate)lysine. Arg413 provides a ligand contact to substrate.

This sequence belongs to the class-I pyridoxal-phosphate-dependent aminotransferase family. Homodimer. The cofactor is pyridoxal 5'-phosphate.

The protein localises to the cytoplasm. It catalyses the reaction L-kynurenine + 2-oxoglutarate = kynurenate + L-glutamate + H2O. The catalysed reaction is 3-phenylpyruvate + L-glutamine = 2-oxoglutaramate + L-phenylalanine. The enzyme catalyses an S-substituted L-cysteine + H2O = a thiol + pyruvate + NH4(+). It functions in the pathway amino-acid degradation; L-kynurenine degradation; kynurenate from L-kynurenine: step 1/2. Functionally, catalyzes the irreversible transamination of the L-tryptophan metabolite L-kynurenine to form kynurenic acid (KA). Metabolizes the cysteine conjugates of certain halogenated alkenes and alkanes to form reactive metabolites. Catalyzes the beta-elimination of S-conjugates and Se-conjugates of L-(seleno)cysteine, resulting in the cleavage of the C-S or C-Se bond. The polypeptide is Kynurenine--oxoglutarate transaminase (ccbl) (Dictyostelium discoideum (Social amoeba)).